A 456-amino-acid polypeptide reads, in one-letter code: Ribonuclease inhibitor (456 aa).

Met-1 is modified (N-acetylmethionine). 15 LRR repeats span residues 15–43, 44–71, 72–100, 101–128, 129–157, 158–185, 186–214, 215–242, 243–271, 272–299, 300–328, 329–356, 357–385, 386–413, and 414–442; these read WTEL…CKDI, SSAV…VGLV, LQGL…CGIL, PGML…LKLL, CEGL…CEPL, ASVL…VRIL, CQGL…CKDL, CDVV…IAAL, CPGL…CKDL, CRVL…ARLL, CESL…CPYF, CSVL…VQEL, CKAL…CSSL, ANVL…VLQL, and LESL…EEQL. Residue Ser-86 is modified to Phosphoserine.

Forms high-affinity heterodimers with RNASE1, ANG and RNASE2.

It localises to the cytoplasm. The protein resides in the nucleus. In terms of biological role, ribonuclease inhibitor which inhibits RNASE1, RNASE2 and angiogenin (ANG). May play a role in redox homeostasis. Required to inhibit the cytotoxic tRNA ribonuclease activity of ANG in the cytoplasm in absence of stress. Relocates to the nucleus in response to stress, relieving inhibition of ANG in the cytoplasm, and inhibiting the angiogenic activity of ANG in the nucleus. This is Ribonuclease inhibitor (Rnh1) from Mus musculus (Mouse).